The chain runs to 987 residues: UvrABC system protein A (987 aa).

ATP is bound at residue 33 to 40; it reads GLSGSGKS. Residues 255-282 form a C4-type zinc finger; it reads CPVCDYSLPELEPRLFSFNAPVGACPSC. ABC transporter domains lie at 312–589 and 609–938; these read WDRR…PRSL and PNPK…QFLA. 642-649 provides a ligand contact to ATP; that stretch reads GVSGSGKS. The C4-type zinc finger occupies 741-767; sequence CEACQGDGMIKVEMHFLPDVYVPCDVC. The interval 948-987 is disordered; that stretch reads ETRPAAMANKPDARPPRKVKPEKVAKAAKSATKKTAKKAS. Positions 958–972 are enriched in basic and acidic residues; the sequence is PDARPPRKVKPEKVA. Residues 978 to 987 are compositionally biased toward basic residues; the sequence is ATKKTAKKAS.

This sequence belongs to the ABC transporter superfamily. UvrA family. Forms a heterotetramer with UvrB during the search for lesions.

The protein localises to the cytoplasm. Its function is as follows. The UvrABC repair system catalyzes the recognition and processing of DNA lesions. UvrA is an ATPase and a DNA-binding protein. A damage recognition complex composed of 2 UvrA and 2 UvrB subunits scans DNA for abnormalities. When the presence of a lesion has been verified by UvrB, the UvrA molecules dissociate. This is UvrABC system protein A from Xanthomonas axonopodis pv. citri (strain 306).